We begin with the raw amino-acid sequence, 228 residues long: Ribosomal RNA small subunit methyltransferase G (228 aa).

S-adenosyl-L-methionine-binding positions include glycine 89, leucine 94, 140–141, and arginine 159; that span reads VE.

It belongs to the methyltransferase superfamily. RNA methyltransferase RsmG family.

The protein localises to the cytoplasm. It carries out the reaction guanosine(527) in 16S rRNA + S-adenosyl-L-methionine = N(7)-methylguanosine(527) in 16S rRNA + S-adenosyl-L-homocysteine. Functionally, specifically methylates the N7 position of guanine in position 527 of 16S rRNA. This is Ribosomal RNA small subunit methyltransferase G from Burkholderia ambifaria (strain ATCC BAA-244 / DSM 16087 / CCUG 44356 / LMG 19182 / AMMD) (Burkholderia cepacia (strain AMMD)).